The primary structure comprises 449 residues: Ribulose bisphosphate carboxylase large chain (449 aa).

Position 7 is an N6,N6,N6-trimethyllysine (lysine 7). 2 residues coordinate substrate: asparagine 116 and threonine 166. The Proton acceptor role is filled by lysine 168. Lysine 170 serves as a coordination point for substrate. 3 residues coordinate Mg(2+): lysine 194, aspartate 196, and glutamate 197. Lysine 194 is modified (N6-carboxylysine). Histidine 287 functions as the Proton acceptor in the catalytic mechanism. Positions 288, 320, and 372 each coordinate substrate.

Belongs to the RuBisCO large chain family. Type I subfamily. As to quaternary structure, heterohexadecamer of 8 large chains and 8 small chains; disulfide-linked. The disulfide link is formed within the large subunit homodimers. Mg(2+) is required as a cofactor. The disulfide bond which can form in the large chain dimeric partners within the hexadecamer appears to be associated with oxidative stress and protein turnover.

The protein localises to the plastid. The protein resides in the chloroplast. The enzyme catalyses 2 (2R)-3-phosphoglycerate + 2 H(+) = D-ribulose 1,5-bisphosphate + CO2 + H2O. The catalysed reaction is D-ribulose 1,5-bisphosphate + O2 = 2-phosphoglycolate + (2R)-3-phosphoglycerate + 2 H(+). Functionally, ruBisCO catalyzes two reactions: the carboxylation of D-ribulose 1,5-bisphosphate, the primary event in carbon dioxide fixation, as well as the oxidative fragmentation of the pentose substrate in the photorespiration process. Both reactions occur simultaneously and in competition at the same active site. This chain is Ribulose bisphosphate carboxylase large chain, found in Aspidistra elatior (Cast-iron plant).